Reading from the N-terminus, the 222-residue chain is N-(5'-phosphoribosyl)anthranilate isomerase (222 aa).

Belongs to the TrpF family.

It catalyses the reaction N-(5-phospho-beta-D-ribosyl)anthranilate = 1-(2-carboxyphenylamino)-1-deoxy-D-ribulose 5-phosphate. It functions in the pathway amino-acid biosynthesis; L-tryptophan biosynthesis; L-tryptophan from chorismate: step 3/5. The sequence is that of N-(5'-phosphoribosyl)anthranilate isomerase from Xanthomonas oryzae pv. oryzae (strain PXO99A).